The following is a 94-amino-acid chain: Co-chaperonin GroES (94 aa).

This sequence belongs to the GroES chaperonin family. In terms of assembly, heptamer of 7 subunits arranged in a ring. Interacts with the chaperonin GroEL.

The protein localises to the cytoplasm. Functionally, together with the chaperonin GroEL, plays an essential role in assisting protein folding. The GroEL-GroES system forms a nano-cage that allows encapsulation of the non-native substrate proteins and provides a physical environment optimized to promote and accelerate protein folding. GroES binds to the apical surface of the GroEL ring, thereby capping the opening of the GroEL channel. The chain is Co-chaperonin GroES from Bacillus cytotoxicus (strain DSM 22905 / CIP 110041 / 391-98 / NVH 391-98).